The sequence spans 203 residues: Large ribosomal subunit protein bL25 (203 aa).

The protein belongs to the bacterial ribosomal protein bL25 family. CTC subfamily. In terms of assembly, part of the 50S ribosomal subunit; part of the 5S rRNA/L5/L18/L25 subcomplex. Contacts the 5S rRNA. Binds to the 5S rRNA independently of L5 and L18.

Its function is as follows. This is one of the proteins that binds to the 5S RNA in the ribosome where it forms part of the central protuberance. This is Large ribosomal subunit protein bL25 from Cellvibrio japonicus (strain Ueda107) (Pseudomonas fluorescens subsp. cellulosa).